The primary structure comprises 348 residues: MLTRLKAKSEGKLAKQLCRVVLDQFDKQYSKELGDSWSTVRDVLISPSLWQYAILFNRFNYPFELEKALHLRGYHTVLQGALPHYPKSMKCYLSRTPDRMPSERHQTGSLKKYYLLNAASLLPVLALELRDGEAVLDLCAAPGGKSVALLQCAYPGYLLCNEYDRPRGRWLRQTLESFIPQPLINVIKVSELDGREMGDAQPATFDKVLVDAPCSNDRSWLFSSDSQKAAYRIHQRKNLPVLQVELVRSAIKALRPGGLLVYSTCTLSKAENQDVISEVLTSDSNIVPVDISGIARTFSQDFTFAPTDQKCSLLVIPEKGKAWGPMYIAKLKKGMSTRKRQGEFCKPC.

S-adenosyl-L-methionine-binding positions include 139–145, glutamate 162, aspartate 193, and aspartate 211; that span reads CAAPGGK. Cysteine 265 (nucleophile) is an active-site residue.

It belongs to the class I-like SAM-binding methyltransferase superfamily. RsmB/NOP family.

The protein resides in the mitochondrion matrix. The catalysed reaction is cytidine(34) in mitochondrial tRNA + S-adenosyl-L-methionine = 5-methylcytidine(34) in mitochondrial tRNA + S-adenosyl-L-homocysteine + H(+). Functionally, mitochondrial tRNA methyltransferase that mediates methylation of cytosine to 5-methylcytosine (m5C) at position 34 of mt-tRNA(Met). mt-tRNA(Met) methylation at cytosine(34) takes place at the wobble position of the anticodon and initiates the formation of 5-formylcytosine (f(5)c) at this position. mt-tRNA(Met) containing the f(5)c modification at the wobble position enables recognition of the AUA codon in addition to the AUG codon, expanding codon recognition in mitochondrial translation. In Mus musculus (Mouse), this protein is tRNA (cytosine(34)-C(5))-methyltransferase, mitochondrial.